Reading from the N-terminus, the 234-residue chain is Fibronectin type III domain-containing protein 4 (234 aa).

Positions 1–44 (MPSGCHSSPPSGLRGDMASLVPLSPYLSPTVLLLVSCDLGFVRA) are cleaved as a signal peptide. Topologically, residues 45 to 167 (DRPPSPVNVT…GLDGERPLQT (123 aa)) are extracellular. Positions 47–140 (PPSPVNVTVT…PRVHFRTLKG (94 aa)) constitute a Fibronectin type-III domain. N-linked (GlcNAc...) asparagine glycans are attached at residues Asn52, Asn97, and Asn147. The interval 122 to 160 (GLRGESPPGPRVHFRTLKGSDRLPSNSSSPGDITVEGLD) is disordered. A helical membrane pass occupies residues 168–188 (GEVVIIVVVLLMWAAVIGLFC). Topologically, residues 189–234 (RQYDIIKDNDSNNNPKEKGKGPEQSPQGRPVGTRQKKSPSINTIDV) are cytoplasmic. Basic and acidic residues predominate over residues 197-209 (NDSNNNPKEKGKG). The segment at 197–234 (NDSNNNPKEKGKGPEQSPQGRPVGTRQKKSPSINTIDV) is disordered.

In terms of tissue distribution, highly expressed in the liver and the brain, including in the cortex, hypothalamus and hippocampus. Also expressed in adipose tissue.

It localises to the membrane. It is found in the secreted. In terms of biological role, has anti-inflammatory properties. In the colon, acts on macrophages to down-regulate inflammation. May suppress osteoclastogenesis and mature osteoclast resorptive function. In white adipose tissue, decreases local inflammation, via interaction with GPR116. Also required for proper systemic glucose tolerance, specifically sensitizing white adipocytes to insulin and promoting glucose uptake. The insulin sensitizing function in adipose tissue is mediated by interaction with ADGRF5/GPR116 and activation of cAMP signaling. The polypeptide is Fibronectin type III domain-containing protein 4 (FNDC4) (Homo sapiens (Human)).